The sequence spans 137 residues: MRLYILVLAAIAVTLVFASSGPAITYHEVGTRALRQASITDEKSDDSLNAQAPPLSKSEKRLSRSFRTTSRRLPYTNYYHPQYYHPQNYHPHYNYPQYHSSPHVYVHQESKKSWFVRMILEAGIFWAVFHCLSAAFC.

An N-terminal signal peptide occupies residues 1 to 18 (MRLYILVLAAIAVTLVFA). The RxLR-dEER signature appears at 32–61 (RALRQASITDEKSDDSLNAQAPPLSKSEKR). The segment at 40–65 (TDEKSDDSLNAQAPPLSKSEKRLSRS) is disordered. The helical transmembrane segment at 114–134 (WFVRMILEAGIFWAVFHCLSA) threads the bilayer.

The protein belongs to the RxLR effector family.

The protein resides in the secreted. The protein localises to the host cytoplasm. It is found in the host nucleus. Its subcellular location is the membrane. In terms of biological role, effector that partially suppresses the tobacco programmed cell death induced by cell death-inducing proteins. The sequence is that of Secreted RxLR effector protein 67 from Plasmopara viticola (Downy mildew of grapevine).